The sequence spans 278 residues: Probable NADP-dependent mannitol dehydrogenase (278 aa).

3 residues coordinate NADP(+): Ile-45, Asn-117, and Lys-152. Active-site proton donor residues include Ser-171 and Tyr-186. Residues Tyr-186, Lys-190, and Thr-220 each contribute to the NADP(+) site. Catalysis depends on Lys-190, which acts as the Lowers pKa of active site Tyr.

It belongs to the short-chain dehydrogenases/reductases (SDR) family. In terms of assembly, homotetramer.

It catalyses the reaction D-mannitol + NADP(+) = D-fructose + NADPH + H(+). Versatile oxidoreductase that catalyzes the oxidation and reduction of polar as well as non-polar substrates at a very broad pH range. Preferentially oxidizes secondary alcohols. Has highest activity for racemic 2-heptanol and racemic octanol. Is also an efficient reductase for selected substrates. Substrate selectivity was found for medium chain length ketones with the carbonyl function at position C-2. Has highest activities for ribulose and fructose. The enzyme is (R)-selective in the reduction direction and produces exclusively the (R)-enantiomer. The chain is Probable NADP-dependent mannitol dehydrogenase from Yarrowia lipolytica (strain CLIB 122 / E 150) (Yeast).